Reading from the N-terminus, the 72-residue chain is MAKEEAIEVEGKVVEPLPNAMFRVKLDNGHTILAHISGKMRKFYIRILPGDRVTVELSPYDLTRGRITYREK.

The region spanning 1–72 (MAKEEAIEVE…TRGRITYREK (72 aa)) is the S1-like domain.

This sequence belongs to the IF-1 family. In terms of assembly, component of the 30S ribosomal translation pre-initiation complex which assembles on the 30S ribosome in the order IF-2 and IF-3, IF-1 and N-formylmethionyl-tRNA(fMet); mRNA recruitment can occur at any time during PIC assembly.

It localises to the cytoplasm. One of the essential components for the initiation of protein synthesis. Stabilizes the binding of IF-2 and IF-3 on the 30S subunit to which N-formylmethionyl-tRNA(fMet) subsequently binds. Helps modulate mRNA selection, yielding the 30S pre-initiation complex (PIC). Upon addition of the 50S ribosomal subunit IF-1, IF-2 and IF-3 are released leaving the mature 70S translation initiation complex. This chain is Translation initiation factor IF-1, found in Syntrophotalea carbinolica (strain DSM 2380 / NBRC 103641 / GraBd1) (Pelobacter carbinolicus).